The chain runs to 299 residues: Acetylglutamate kinase (299 aa).

Residues 72–73 (GG), Arg94, and Asn196 each bind substrate.

This sequence belongs to the acetylglutamate kinase family. ArgB subfamily.

Its subcellular location is the cytoplasm. The enzyme catalyses N-acetyl-L-glutamate + ATP = N-acetyl-L-glutamyl 5-phosphate + ADP. The protein operates within amino-acid biosynthesis; L-arginine biosynthesis; N(2)-acetyl-L-ornithine from L-glutamate: step 2/4. Catalyzes the ATP-dependent phosphorylation of N-acetyl-L-glutamate. The polypeptide is Acetylglutamate kinase (Burkholderia vietnamiensis (strain G4 / LMG 22486) (Burkholderia cepacia (strain R1808))).